The sequence spans 109 residues: Flagellar hook-basal body complex protein FliE (109 aa).

It belongs to the FliE family.

The protein localises to the bacterial flagellum basal body. This is Flagellar hook-basal body complex protein FliE from Pseudomonas savastanoi pv. phaseolicola (strain 1448A / Race 6) (Pseudomonas syringae pv. phaseolicola (strain 1448A / Race 6)).